Here is a 240-residue protein sequence, read N- to C-terminus: 2-C-methyl-D-erythritol 4-phosphate cytidylyltransferase (240 aa).

Belongs to the IspD/TarI cytidylyltransferase family. IspD subfamily.

It carries out the reaction 2-C-methyl-D-erythritol 4-phosphate + CTP + H(+) = 4-CDP-2-C-methyl-D-erythritol + diphosphate. It functions in the pathway isoprenoid biosynthesis; isopentenyl diphosphate biosynthesis via DXP pathway; isopentenyl diphosphate from 1-deoxy-D-xylulose 5-phosphate: step 2/6. Functionally, catalyzes the formation of 4-diphosphocytidyl-2-C-methyl-D-erythritol from CTP and 2-C-methyl-D-erythritol 4-phosphate (MEP). The protein is 2-C-methyl-D-erythritol 4-phosphate cytidylyltransferase of Chlorobium luteolum (strain DSM 273 / BCRC 81028 / 2530) (Pelodictyon luteolum).